The primary structure comprises 175 residues: Small ribosomal subunit protein uS7 (175 aa).

It belongs to the universal ribosomal protein uS7 family. In terms of assembly, part of the 30S ribosomal subunit. Contacts proteins S9 and S11.

Functionally, one of the primary rRNA binding proteins, it binds directly to 16S rRNA where it nucleates assembly of the head domain of the 30S subunit. Is located at the subunit interface close to the decoding center, probably blocks exit of the E-site tRNA. The sequence is that of Small ribosomal subunit protein uS7 from Legionella pneumophila (strain Paris).